We begin with the raw amino-acid sequence, 647 residues long: DNA mismatch repair protein MutL (647 aa).

The segment at 377–396 is disordered; the sequence is EEPQAVKQSAQLWQPPKQEW. Low complexity predominate over residues 387–396; sequence QLWQPPKQEW.

It belongs to the DNA mismatch repair MutL/HexB family.

In terms of biological role, this protein is involved in the repair of mismatches in DNA. It is required for dam-dependent methyl-directed DNA mismatch repair. May act as a 'molecular matchmaker', a protein that promotes the formation of a stable complex between two or more DNA-binding proteins in an ATP-dependent manner without itself being part of a final effector complex. This Bacillus cereus (strain AH187) protein is DNA mismatch repair protein MutL.